A 242-amino-acid chain; its full sequence is Orotidine 5'-phosphate decarboxylase (242 aa).

Residues Asp21, Lys43, 71 to 80 (DLKFFDVPET), Thr124, Arg185, Gln195, Gly215, and Arg216 contribute to the substrate site. Residue Lys73 is the Proton donor of the active site.

The protein belongs to the OMP decarboxylase family. Type 1 subfamily. In terms of assembly, homodimer.

The enzyme catalyses orotidine 5'-phosphate + H(+) = UMP + CO2. It functions in the pathway pyrimidine metabolism; UMP biosynthesis via de novo pathway; UMP from orotate: step 2/2. Its function is as follows. Catalyzes the decarboxylation of orotidine 5'-monophosphate (OMP) to uridine 5'-monophosphate (UMP). In Methylococcus capsulatus (strain ATCC 33009 / NCIMB 11132 / Bath), this protein is Orotidine 5'-phosphate decarboxylase.